A 517-amino-acid chain; its full sequence is Cell division cycle protein 73 (517 aa).

Residues 124–135 (SEPEAKKPRLDG) are compositionally biased toward basic and acidic residues. Disordered regions lie at residues 124-159 (SEPE…SAAK) and 306-326 (GHHA…LAKP). Residues 315 to 324 (DAPPGRPPLA) are compositionally biased toward pro residues.

Belongs to the CDC73 family. Component of the PAF1 complex which consists of at least cdc-73, ctr-9, leo-1, pafo-1 and rtfo-1.

It localises to the nucleus. Functionally, component of the PAF1 complex which is a multifunctional complex involved in transcription initiation via genetic interactions with TATA-binding proteins, elongation and transcription-coupled histone modification. The sequence is that of Cell division cycle protein 73 from Caenorhabditis elegans.